The following is a 125-amino-acid chain: Small ribosomal subunit protein uS11 (125 aa).

Belongs to the universal ribosomal protein uS11 family. In terms of assembly, part of the 30S ribosomal subunit. Interacts with proteins S7 and S18. Binds to IF-3.

Its function is as follows. Located on the platform of the 30S subunit, it bridges several disparate RNA helices of the 16S rRNA. Forms part of the Shine-Dalgarno cleft in the 70S ribosome. In Aquifex aeolicus (strain VF5), this protein is Small ribosomal subunit protein uS11.